The sequence spans 209 residues: Small ribosomal subunit protein uS4 (209 aa).

Residues 98–158 enclose the S4 RNA-binding domain; the sequence is SRVDNIVYRL…EKSRSLAAIK (61 aa).

Belongs to the universal ribosomal protein uS4 family. As to quaternary structure, part of the 30S ribosomal subunit. Contacts protein S5. The interaction surface between S4 and S5 is involved in control of translational fidelity.

Functionally, one of the primary rRNA binding proteins, it binds directly to 16S rRNA where it nucleates assembly of the body of the 30S subunit. With S5 and S12 plays an important role in translational accuracy. The sequence is that of Small ribosomal subunit protein uS4 from Pseudothermotoga lettingae (strain ATCC BAA-301 / DSM 14385 / NBRC 107922 / TMO) (Thermotoga lettingae).